The following is a 407-amino-acid chain: Putative F-box protein At5g60560 (407 aa).

Residues 2–49 (TMMSDLSEDLVEEILCRVSITSLGAVRSTCKGWYVLSKTRVLCKAETK) enclose the F-box domain.

The protein is Putative F-box protein At5g60560 of Arabidopsis thaliana (Mouse-ear cress).